A 65-amino-acid chain; its full sequence is Large ribosomal subunit protein bL35 (65 aa).

The tract at residues 1–65 is disordered; it reads MPKMKTNRAA…GRLDRMLPYL (65 aa). Positions 10-44 are enriched in basic residues; sequence AAKRFRKTASGKYKAGHANRSHILTKKATKRKRNL. Positions 50–65 are enriched in basic and acidic residues; it reads VRAEDAGRLDRMLPYL.

It belongs to the bacterial ribosomal protein bL35 family.

The chain is Large ribosomal subunit protein bL35 from Xylella fastidiosa (strain M12).